A 200-amino-acid chain; its full sequence is Proteasome subunit beta 2 (200 aa).

A propeptide spans 1–7 (MEEKKTG) (removed in mature form; by autocatalysis). Thr8 acts as the Nucleophile in catalysis.

Belongs to the peptidase T1B family. In terms of assembly, the 20S proteasome core is composed of 14 alpha and 14 beta subunits that assemble into four stacked heptameric rings, resulting in a barrel-shaped structure. The two inner rings, each composed of seven catalytic beta subunits, are sandwiched by two outer rings, each composed of seven alpha subunits. The catalytic chamber with the active sites is on the inside of the barrel. Has a gated structure, the ends of the cylinder being occluded by the N-termini of the alpha-subunits. Is capped at one or both ends by the proteasome regulatory ATPase, PAN.

Its subcellular location is the cytoplasm. It carries out the reaction Cleavage of peptide bonds with very broad specificity.. Its activity is regulated as follows. The formation of the proteasomal ATPase PAN-20S proteasome complex, via the docking of the C-termini of PAN into the intersubunit pockets in the alpha-rings, triggers opening of the gate for substrate entry. Interconversion between the open-gate and close-gate conformations leads to a dynamic regulation of the 20S proteasome proteolysis activity. Its function is as follows. Component of the proteasome core, a large protease complex with broad specificity involved in protein degradation. This is Proteasome subunit beta 2 from Thermococcus gammatolerans (strain DSM 15229 / JCM 11827 / EJ3).